Here is a 370-residue protein sequence, read N- to C-terminus: DNA replication and repair protein RecF (370 aa).

30-37 (GENAQGKT) lines the ATP pocket.

The protein belongs to the RecF family.

The protein localises to the cytoplasm. Functionally, the RecF protein is involved in DNA metabolism; it is required for DNA replication and normal SOS inducibility. RecF binds preferentially to single-stranded, linear DNA. It also seems to bind ATP. The sequence is that of DNA replication and repair protein RecF from Listeria innocua serovar 6a (strain ATCC BAA-680 / CLIP 11262).